We begin with the raw amino-acid sequence, 138 residues long: MNTETKALPAWLDKVRWDDNGLVPVIAQEASTNDVLMFAWMNREALAKTIETQRAVYYSRSRKRLWFKGEESGHVQHVHEVRLDCDEDVVLLKVEQVSGIACHTGRHSCFFQKFEGTVDGGDWVAVDPVLKDPEHIYK.

D84 is a binding site for Mg(2+). C85 contacts Zn(2+). Mg(2+) is bound by residues D86 and D88. The Zn(2+) site is built by C102 and C109.

This sequence belongs to the PRA-CH family. In terms of assembly, homodimer. The cofactor is Mg(2+). Zn(2+) serves as cofactor.

It is found in the cytoplasm. It carries out the reaction 1-(5-phospho-beta-D-ribosyl)-5'-AMP + H2O = 1-(5-phospho-beta-D-ribosyl)-5-[(5-phospho-beta-D-ribosylamino)methylideneamino]imidazole-4-carboxamide. It functions in the pathway amino-acid biosynthesis; L-histidine biosynthesis; L-histidine from 5-phospho-alpha-D-ribose 1-diphosphate: step 3/9. Functionally, catalyzes the hydrolysis of the adenine ring of phosphoribosyl-AMP. This chain is Phosphoribosyl-AMP cyclohydrolase, found in Burkholderia ambifaria (strain ATCC BAA-244 / DSM 16087 / CCUG 44356 / LMG 19182 / AMMD) (Burkholderia cepacia (strain AMMD)).